A 367-amino-acid chain; its full sequence is DNA replication and repair protein RecF (367 aa).

Position 30–37 (30–37 (GANGSGKT)) interacts with ATP.

This sequence belongs to the RecF family.

Its subcellular location is the cytoplasm. Its function is as follows. The RecF protein is involved in DNA metabolism; it is required for DNA replication and normal SOS inducibility. RecF binds preferentially to single-stranded, linear DNA. It also seems to bind ATP. The protein is DNA replication and repair protein RecF of Pseudomonas putida (strain ATCC 47054 / DSM 6125 / CFBP 8728 / NCIMB 11950 / KT2440).